The chain runs to 107 residues: Nitrogenase-stabilizing/protective protein NifW (107 aa).

Belongs to the NifW family. Homotrimer; associates with NifD.

May protect the nitrogenase Fe-Mo protein from oxidative damage. The chain is Nitrogenase-stabilizing/protective protein NifW from Gloeothece citriformis (strain PCC 7424) (Cyanothece sp. (strain PCC 7424)).